A 2432-amino-acid polypeptide reads, in one-letter code: Polyprotein P1234 (2432 aa).

The region spanning 29-260 (ESLQVTPNDH…ESRKLLRSWH (232 aa)) is the Alphavirus-like MT domain. The segment at 245-264 (GSTLYTESRKLLRSWHLPSV) is nsP1 membrane-binding. Residues Cys418 and Cys420 are each lipidated (S-palmitoyl cysteine; by host). The (+)RNA virus helicase ATP-binding domain occupies 692 to 844 (ELTNPPFHEF…HNICTEVCHK (153 aa)). 723–730 (GVPGSGKS) provides a ligand contact to a ribonucleoside 5'-triphosphate. The 149-residue stretch at 845-993 (SISRRCTRPV…LEEWQEEHDK (149 aa)) folds into the (+)RNA virus helicase C-terminal domain. The Peptidase C9 domain maps to 1006 to 1329 (DAFQNKANVC…TKLSAVYAGE (324 aa)). Residues 1007-1026 (AFQNKANVCWAKSLVPVLDT) form a nucleolus localization signal region. Cys1015 (for cysteine protease nsP2 activity) is an active-site residue. The Nuclear export signal motif lies at 1060–1069 (TKYYGVDLDS). His1085 functions as the For cysteine protease nsP2 activity in the catalytic mechanism. The Nuclear localization signal signature appears at 1184–1188 (PRRRV). The 159-residue stretch at 1337–1495 (APSYRVKRAD…KKIQEAIDMR (159 aa)) folds into the Macro domain. 6 residues coordinate ADP-D-ribose: Asp1346, Asn1360, Gly1368, Gly1448, Val1449, and Phe1450. The Zn(2+) site is built by Cys1598, Cys1600, Cys1623, and Cys1641. Phosphothreonine; by host occurs at positions 1680 and 1681. Residues 1759-1779 (RAAERPVPAPRKPTPAPRTAF) form a disordered region. Pro residues predominate over residues 1765 to 1774 (VPAPRKPTPA). Short sequence motifs (FGDF; binding to host G3BP1) lie at residues 1787–1790 (FGDF) and 1804–1807 (FGDF). The RdRp catalytic domain maps to 2182–2297 (GDPVLETDIA…VHGVISDKLM (116 aa)).

In terms of assembly, interacts with non-structural protein 3. Interacts with RNA-directed RNA polymerase nsP4. Interacts with protease nsP2. interacts with itself. As to quaternary structure, interacts with mRNA-capping enzyme nsP1. Interacts with host DDX1. Interacts with host DDX3. Interacts (via C-terminus) with host G3BP1; this interaction inhibits the formation of host stress granules on viral mRNAs and the nsp3-G3BP1 complexes bind viral RNAs and probably orchestrate the assembly of viral replication complexes. Interacts (via C-terminus) with host G3BP2; this interaction inhibits the formation of host stress granules on viral mRNAs and the nsp3-G3BP2 complexes bind viral RNAs and probably orchestrate the assembly of viral replication complexes. Interacts with mRNA-capping enzyme nsP1. Interacts with protease nsP2. interacts with itself. In terms of assembly, interacts with RNA-directed RNA polymerase nsP4. Interacts with mRNA-capping enzyme nsP1. Interacts with KPNA1/karyopherin-alpha1; this interaction probably allows the active transport of protease nsP2 into the host nucleus. Mg(2+) serves as cofactor. Requires Mn(2+) as cofactor. In terms of processing, specific enzymatic cleavages in vivo yield mature proteins. The processing of the polyprotein is temporally regulated. In early stages (1.7 hpi), P1234 is first cleaved in trans through its nsP2 protease activity, releasing P123' and nsP4, which associate to form the early replication complex. At the same time, P1234 is also cut at the nsP1/nsP2 site early in infection but with lower efficiency. After replication of the viral minus-strand RNAs (4 hpi), the polyproteins are cut at the nsP1/nsP2 and nsP2/nsP3 sites very efficiently, preventing accumulation of P123' and P1234 and allowing the formation of the late replication complex. NsP3'/nsP4 site is not cleaved anymore and P34 is produced rather than nsP4. Specific enzymatic cleavages in vivo yield mature proteins. The processing of the polyprotein is temporally regulated. In early stages (1.7 hpi), P123' is cleaved at the nsP1/nsP2 site with low efficiency. After replication of the viral minus-strand RNAs (4 hpi), the polyproteins are cut at the nsP1/nsP2 and nsP2/nsP3 sites very efficiently, preventing accumulation of P123' and allowing the formation of the late replication complex. Post-translationally, specific enzymatic cleavages in vivo yield mature proteins. The processing of the polyprotein is temporally regulated. In early stages (1.7 hpi), P123 is cleaved at the nsP1/nsP2 site with low efficiency. After replication of the viral minus-strand RNAs (4 hpi), the polyproteins are cut at the nsP1/nsP2 and nsP2/nsP3 sites very efficiently, preventing accumulation of P123 and allowing the formation of the late replication complex. In terms of processing, palmitoylated by host palmitoyltransferases ZDHHC2 and ZDHHC19. Phosphorylated by host on serines and threonines. Post-translationally, ubiquitinated; targets the protein for rapid degradation via the ubiquitin system. Nsp4 is present in extremely low quantities due to low frequency of translation through the amber stop-codon and the degradation by the ubiquitin pathway.

It localises to the host cytoplasmic vesicle membrane. It is found in the host cell membrane. The protein resides in the host cell projection. The protein localises to the host filopodium. Its subcellular location is the host nucleus. It localises to the host cytoplasm. The enzyme catalyses GTP + S-adenosyl-L-methionine = N(7)-methyl-GTP + S-adenosyl-L-homocysteine. It carries out the reaction N(7)-methyl-GTP + L-histidyl-[protein] = N(tele)-(N(7)-methylguanosine 5'-phospho)-L-histidyl-[protein] + diphosphate. It catalyses the reaction N(tele)-(N(7)-methylguanosine 5'-phospho)-L-histidyl-[protein] + a 5'-end diphospho-(purine-ribonucleoside) in mRNA + H(+) = a 5'-end (N(7)-methyl 5'-triphosphoguanosine)-(purine-ribonucleoside) in mRNA + L-histidyl-[protein]. The catalysed reaction is a 5'-end triphospho-ribonucleoside in mRNA + H2O = a 5'-end diphospho-ribonucleoside in mRNA + phosphate + H(+). The enzyme catalyses a ribonucleoside 5'-triphosphate + H2O = a ribonucleoside 5'-diphosphate + phosphate + H(+). It carries out the reaction ATP + H2O = ADP + phosphate + H(+). It catalyses the reaction RNA(n) + a ribonucleoside 5'-triphosphate = RNA(n+1) + diphosphate. The catalysed reaction is RNA(n) + ATP = RNA(n)-3'-adenine ribonucleotide + diphosphate. The enzyme catalyses 4-O-(ADP-D-ribosyl)-L-aspartyl-[protein] + H2O = L-aspartyl-[protein] + ADP-D-ribose + H(+). It carries out the reaction 5-O-(ADP-D-ribosyl)-L-glutamyl-[protein] + H2O = L-glutamyl-[protein] + ADP-D-ribose + H(+). It catalyses the reaction ADP-alpha-D-ribose 1''-phosphate + H2O = ADP-D-ribose + phosphate. With respect to regulation, inhibited by N-ethylmaleimide, Zn(2+), and Cu2(2+). Functionally, inactive precursor of the viral replicase, which is activated by cleavages carried out by the viral protease nsP2. Its function is as follows. The early replication complex formed by the polyprotein P123 and nsP4 synthesizes minus-strand RNAs. As soon P123 is cleaved into mature proteins, the plus-strand RNAs synthesis begins. In terms of biological role, the early replication complex formed by the polyprotein P123' and nsP4 synthesizes minus-strand RNAs. Polyprotein P123' is a short-lived polyprotein that accumulates during early stage of infection. As soon P123' is cleaved into mature proteins, the plus-strand RNAs synthesis begins. Cytoplasmic capping enzyme that catalyzes two virus-specific reactions: methyltransferase and nsP1 guanylyltransferase. mRNA-capping is necessary since all viral RNAs are synthesized in the cytoplasm, and host capping enzymes are restricted to the nucleus. The enzymatic reaction involves a covalent link between 7-methyl-GMP and nsP1, whereas eukaryotic capping enzymes form a covalent complex only with GMP. nsP1 capping consists in the following reactions: GTP is first methylated into 7-methyl-GMP and then is covalently linked to nsP1 to form the m7GMp-nsP1 complex from which 7-methyl-GMP complex is transferred to the mRNA to create the cap structure. NsP1 is also needed for the initiation of the minus-strand RNAs synthesis. Probably serves as a membrane anchor for the replication complex composed of nsP1-nsP4. Palmitoylated nsP1 is remodeling host cell cytoskeleton, and induces filopodium-like structure formation at the surface of the host cell. Functionally, multifunctional protein whose N-terminus is part of the RNA polymerase complex and displays NTPase, RNA triphosphatase and helicase activities. NTPase and RNA triphosphatase are involved in viral RNA capping and helicase keeps a check on the dsRNA replication intermediates. The C-terminus harbors a protease that specifically cleaves and releases the mature proteins. Required for the shutoff of minus-strand RNAs synthesis. Specifically inhibits the host IFN response by promoting the nuclear export of host STAT1. Also inhibits host transcription by inducing rapid proteasome-dependent degradation of POLR2A, a catalytic subunit of the RNAPII complex. The resulting inhibition of cellular protein synthesis serves to ensure maximal viral gene expression and to evade host immune response. Its function is as follows. Seems to be essential for minus-strand RNAs and subgenomic 26S mRNAs synthesis. Displays mono-ADP-ribosylhydrolase activity. ADP-ribosylation is a post-translational modification that controls various processes of the host cell and the virus probably needs to revert it for optimal viral replication. Binds proteins of FXR family and sequesters them into the viral RNA replication complexes thereby inhibiting the formation of host stress granules on viral mRNAs. The nsp3'-FXR complexes bind viral RNAs and probably orchestrate the assembly of viral replication complexes, thanks to the ability of FXR family members to self-assemble and bind DNA. In terms of biological role, seems to be essential for minus-strand RNAs and subgenomic 26S mRNAs synthesis. Displays mono-ADP-ribosylhydrolase activity. ADP-ribosylation is a post-translational modification that controls various processes of the host cell and the virus probably needs to revert it for optimal viral replication. Binds proteins of G3BP family and sequesters them into the viral RNA replication complexes thereby inhibiting the formation of host stress granules on viral mRNAs. The nsp3-G3BP complexes bind viral RNAs and probably orchestrate the assembly of viral replication complexes, thanks to the ability of G3BP family members to self-assemble and bind DNA. RNA dependent RNA polymerase. Replicates genomic and antigenomic RNA by recognizing replications specific signals. The early replication complex formed by the polyprotein P123 and nsP4 synthesizes minus-strand RNAs. The late replication complex composed of fully processed nsP1-nsP4 is responsible for the production of genomic and subgenomic plus-strand RNAs. This Aedes (Middle-African hedgehog) protein is Polyprotein P1234.